Consider the following 498-residue polypeptide: ATP synthase subunit beta, chloroplastic (498 aa).

Position 6 is a phosphothreonine (T6). At S13 the chain carries Phosphoserine. 172 to 179 (GGAGVGKT) is an ATP binding site.

The protein belongs to the ATPase alpha/beta chains family. As to quaternary structure, F-type ATPases have 2 components, CF(1) - the catalytic core - and CF(0) - the membrane proton channel. CF(1) has five subunits: alpha(3), beta(3), gamma(1), delta(1), epsilon(1). CF(0) has four main subunits: a(1), b(1), b'(1) and c(9-12).

It localises to the plastid. Its subcellular location is the chloroplast thylakoid membrane. The catalysed reaction is ATP + H2O + 4 H(+)(in) = ADP + phosphate + 5 H(+)(out). Its function is as follows. Produces ATP from ADP in the presence of a proton gradient across the membrane. The catalytic sites are hosted primarily by the beta subunits. In Raphanus sativus (Radish), this protein is ATP synthase subunit beta, chloroplastic.